The following is a 490-amino-acid chain: Protein nucleotidyltransferase YdiU (490 aa).

ATP is bound by residues glycine 94, glycine 96, arginine 97, lysine 117, aspartate 129, glycine 130, arginine 180, and arginine 187. Aspartate 256 acts as the Proton acceptor in catalysis. 2 residues coordinate Mg(2+): asparagine 257 and aspartate 266. Aspartate 266 contributes to the ATP binding site.

The protein belongs to the SELO family. Mg(2+) serves as cofactor. It depends on Mn(2+) as a cofactor.

It catalyses the reaction L-seryl-[protein] + ATP = 3-O-(5'-adenylyl)-L-seryl-[protein] + diphosphate. The catalysed reaction is L-threonyl-[protein] + ATP = 3-O-(5'-adenylyl)-L-threonyl-[protein] + diphosphate. The enzyme catalyses L-tyrosyl-[protein] + ATP = O-(5'-adenylyl)-L-tyrosyl-[protein] + diphosphate. It carries out the reaction L-histidyl-[protein] + UTP = N(tele)-(5'-uridylyl)-L-histidyl-[protein] + diphosphate. It catalyses the reaction L-seryl-[protein] + UTP = O-(5'-uridylyl)-L-seryl-[protein] + diphosphate. The catalysed reaction is L-tyrosyl-[protein] + UTP = O-(5'-uridylyl)-L-tyrosyl-[protein] + diphosphate. Nucleotidyltransferase involved in the post-translational modification of proteins. It can catalyze the addition of adenosine monophosphate (AMP) or uridine monophosphate (UMP) to a protein, resulting in modifications known as AMPylation and UMPylation. The polypeptide is Protein nucleotidyltransferase YdiU (Clostridium perfringens (strain SM101 / Type A)).